The following is a 429-amino-acid chain: Serine--tRNA ligase (429 aa).

234 to 236 lines the L-serine pocket; sequence TSE. ATP contacts are provided by residues 265–267 and Val-281; that span reads RKE. Position 288 (Glu-288) interacts with L-serine. Residue 352–355 participates in ATP binding; that stretch reads ELVS. Residue Thr-389 coordinates L-serine.

Belongs to the class-II aminoacyl-tRNA synthetase family. Type-1 seryl-tRNA synthetase subfamily. Homodimer. The tRNA molecule probably binds across the dimer.

It carries out the reaction tRNA(Ser) + L-serine + ATP = L-seryl-tRNA(Ser) + AMP + diphosphate + H(+). The catalysed reaction is tRNA(Sec) + L-serine + ATP = L-seryl-tRNA(Sec) + AMP + diphosphate + H(+). It functions in the pathway aminoacyl-tRNA biosynthesis; selenocysteinyl-tRNA(Sec) biosynthesis; L-seryl-tRNA(Sec) from L-serine and tRNA(Sec): step 1/1. Its function is as follows. Catalyzes the attachment of serine to tRNA(Ser). Is also probably able to aminoacylate tRNA(Sec) with serine, to form the misacylated tRNA L-seryl-tRNA(Sec), which will be further converted into selenocysteinyl-tRNA(Sec). This Encephalitozoon cuniculi (strain GB-M1) (Microsporidian parasite) protein is Serine--tRNA ligase.